Here is a 99-residue protein sequence, read N- to C-terminus: Secreted RxLR effector protein 94 (99 aa).

The RxLR-dEER motif lies at 35 to 55 (RQLRQSANPSKAWHQWKSETR).

The protein belongs to the RxLR effector family.

Its subcellular location is the secreted. The protein localises to the host nucleus. It localises to the host cytoplasm. In terms of biological role, secreted effector that completely suppresses the host cell death induced by cell death-inducing proteins. In Plasmopara viticola (Downy mildew of grapevine), this protein is Secreted RxLR effector protein 94.